The chain runs to 174 residues: ATP synthase subunit b (174 aa).

The helical transmembrane segment at 15–33 (NPGLVIWTLVTFSVVVFVL) threads the bilayer.

The protein belongs to the ATPase B chain family. As to quaternary structure, F-type ATPases have 2 components, F(1) - the catalytic core - and F(0) - the membrane proton channel. F(1) has five subunits: alpha(3), beta(3), gamma(1), delta(1), epsilon(1). F(0) has three main subunits: a(1), b(2) and c(10-14). The alpha and beta chains form an alternating ring which encloses part of the gamma chain. F(1) is attached to F(0) by a central stalk formed by the gamma and epsilon chains, while a peripheral stalk is formed by the delta and b chains.

The protein resides in the cell inner membrane. In terms of biological role, f(1)F(0) ATP synthase produces ATP from ADP in the presence of a proton or sodium gradient. F-type ATPases consist of two structural domains, F(1) containing the extramembraneous catalytic core and F(0) containing the membrane proton channel, linked together by a central stalk and a peripheral stalk. During catalysis, ATP synthesis in the catalytic domain of F(1) is coupled via a rotary mechanism of the central stalk subunits to proton translocation. Functionally, component of the F(0) channel, it forms part of the peripheral stalk, linking F(1) to F(0). This chain is ATP synthase subunit b, found in Leptospira biflexa serovar Patoc (strain Patoc 1 / Ames).